The primary structure comprises 218 residues: Ribose-5-phosphate isomerase A (218 aa).

Substrate-binding positions include lysine 7, 28–31 (TGST), 81–84 (DGAD), and 94–97 (KGGG). Catalysis depends on glutamate 103, which acts as the Proton acceptor. Lysine 121 lines the substrate pocket.

It belongs to the ribose 5-phosphate isomerase family. Homodimer.

It carries out the reaction aldehydo-D-ribose 5-phosphate = D-ribulose 5-phosphate. It participates in carbohydrate degradation; pentose phosphate pathway; D-ribose 5-phosphate from D-ribulose 5-phosphate (non-oxidative stage): step 1/1. Functionally, catalyzes the reversible conversion of ribose-5-phosphate to ribulose 5-phosphate. The sequence is that of Ribose-5-phosphate isomerase A from Vibrio vulnificus (strain YJ016).